The sequence spans 1010 residues: Translation initiation factor IF-2 (1010 aa).

Disordered regions lie at residues 54 to 350 (KGLA…FEDD) and 364 to 420 (PSFT…RPES). The span at 57–70 (ASSTSKNSTGQRES) shows a compositional bias: polar residues. Positions 112-124 (ISPPRPPVKPLVA) are enriched in pro residues. The segment covering 145–155 (HSPSVKETPTE) has biased composition (polar residues). Residues 200–258 (DRPRGEKRERGESENAPSPERRVGLAKPEKPTLNRKPDGKSPKLAEPAREVRETVELKR) show a composition bias toward basic and acidic residues. A compositionally biased stretch (low complexity) spans 378 to 389 (TAKAAPPGTPTA). Positions 406 to 419 (KSERQEPQEEKRPE) are enriched in basic and acidic residues. The 174-residue stretch at 502–675 (RRPPVVTIMG…LLVAEVEELV (174 aa)) folds into the tr-type G domain. A G1 region spans residues 511 to 518 (GHVDHGKT). 511 to 518 (GHVDHGKT) lines the GTP pocket. The tract at residues 536–540 (GITQH) is G2. The tract at residues 561-564 (DTPG) is G3. GTP contacts are provided by residues 561-565 (DTPGH) and 615-618 (NKVD). Residues 615 to 618 (NKVD) form a G4 region. The G5 stretch occupies residues 651–653 (SAL).

It belongs to the TRAFAC class translation factor GTPase superfamily. Classic translation factor GTPase family. IF-2 subfamily.

The protein localises to the cytoplasm. In terms of biological role, one of the essential components for the initiation of protein synthesis. Protects formylmethionyl-tRNA from spontaneous hydrolysis and promotes its binding to the 30S ribosomal subunits. Also involved in the hydrolysis of GTP during the formation of the 70S ribosomal complex. The sequence is that of Translation initiation factor IF-2 from Microcystis aeruginosa (strain NIES-843 / IAM M-2473).